The sequence spans 358 residues: tRNA-specific 2-thiouridylase MnmA (358 aa).

ATP is bound by residues 7–14 (AMSGGVDS) and Met-33. Cys-102 (nucleophile) is an active-site residue. An intrachain disulfide couples Cys-102 to Cys-199. Gly-126 lines the ATP pocket. Residues 149 to 151 (KDQ) are interaction with tRNA. Cys-199 acts as the Cysteine persulfide intermediate in catalysis. An interaction with tRNA region spans residues 305-306 (RY).

This sequence belongs to the MnmA/TRMU family.

Its subcellular location is the cytoplasm. It carries out the reaction S-sulfanyl-L-cysteinyl-[protein] + uridine(34) in tRNA + AH2 + ATP = 2-thiouridine(34) in tRNA + L-cysteinyl-[protein] + A + AMP + diphosphate + H(+). In terms of biological role, catalyzes the 2-thiolation of uridine at the wobble position (U34) of tRNA, leading to the formation of s(2)U34. The polypeptide is tRNA-specific 2-thiouridylase MnmA (Halothermothrix orenii (strain H 168 / OCM 544 / DSM 9562)).